We begin with the raw amino-acid sequence, 251 residues long: 5'-nucleotidase SurE (251 aa).

A divalent metal cation-binding residues include aspartate 8, aspartate 9, serine 39, and asparagine 90.

Belongs to the SurE nucleotidase family. A divalent metal cation is required as a cofactor.

The protein resides in the cytoplasm. The catalysed reaction is a ribonucleoside 5'-phosphate + H2O = a ribonucleoside + phosphate. Nucleotidase that shows phosphatase activity on nucleoside 5'-monophosphates. The sequence is that of 5'-nucleotidase SurE from Legionella pneumophila subsp. pneumophila (strain Philadelphia 1 / ATCC 33152 / DSM 7513).